The primary structure comprises 167 residues: Cytochrome c-type biogenesis protein CcmE (167 aa).

Topologically, residues 1-7 are cytoplasmic; it reads MTRKTRR. Residues 8-28 traverse the membrane as a helical; Signal-anchor for type II membrane protein segment; sequence LWIVIACLACVGSAAALTLRA. Residues 29-167 are Periplasmic-facing; the sequence is FSSNIVFFMA…DTMTAKKAGG (139 aa). His125 and Tyr129 together coordinate heme. Basic and acidic residues predominate over residues 141–150; the sequence is TGKWDPRFGK. The disordered stretch occupies residues 141-167; it reads TGKWDPRFGKAPDASSWDTMTAKKAGG.

This sequence belongs to the CcmE/CycJ family.

The protein localises to the cell inner membrane. Functionally, heme chaperone required for the biogenesis of c-type cytochromes. Transiently binds heme delivered by CcmC and transfers the heme to apo-cytochromes in a process facilitated by CcmF and CcmH. This chain is Cytochrome c-type biogenesis protein CcmE, found in Gluconobacter oxydans (strain 621H) (Gluconobacter suboxydans).